Consider the following 431-residue polypeptide: Glutamate-1-semialdehyde 2,1-aminomutase (431 aa).

N6-(pyridoxal phosphate)lysine is present on lysine 265.

Belongs to the class-III pyridoxal-phosphate-dependent aminotransferase family. HemL subfamily. As to quaternary structure, homodimer. Pyridoxal 5'-phosphate serves as cofactor.

The protein localises to the cytoplasm. It carries out the reaction (S)-4-amino-5-oxopentanoate = 5-aminolevulinate. It functions in the pathway porphyrin-containing compound metabolism; protoporphyrin-IX biosynthesis; 5-aminolevulinate from L-glutamyl-tRNA(Glu): step 2/2. This Vibrio parahaemolyticus serotype O3:K6 (strain RIMD 2210633) protein is Glutamate-1-semialdehyde 2,1-aminomutase.